Consider the following 473-residue polypeptide: MAQHDFVPAWLNFSTPQSSKSSTATFDKHGEHLSRGEGRFGISRRRHNSSDGFFNNGPLRTTGDSWHQPSLFRHDSVDSGVSKGAYAGTTGWHGSSRGHDGMSQRSGGSSTGNHRHWNGSFHSRKGCAFQEKTPTEIREEKKEDKVEKLQFEEEDFPSLNPEAGKQNQPCRPVGTPSGVWENPPSAKQPSKMLVIKKISKEDPAAAFSAAFTSSGSHHANGNKVSTMVPSVYKNLVPKPAPPPSKPNAWKANRTEHKPGSLCSSRESAFTNPISVTKPVGLAAGAGLHSPKESPSSTTPPIEISSSRLTKLTRRTTDRKSEFLKTLKDERNGDCSESRDCDKLEGLRLEGSHTPEPKENGEQGCLQNGLSLPMVEEGEVLSHSLEAEHRLLKAMGWQEYPENDESCLPLTEDELKEFHLRTEQLRRNGFGKNGLLQSRSCSLSSPWRSTCIAECEDSDSETSSSQTSDDDAWK.

Residues 14-25 (STPQSSKSSTAT) are compositionally biased toward polar residues. Positions 14-55 (STPQSSKSSTATFDKHGEHLSRGEGRFGISRRRHNSSDGFFN) are disordered. Residues 26-38 (FDKHGEHLSRGEG) show a composition bias toward basic and acidic residues. 2 positions are modified to phosphoserine: Ser49 and Ser76. 2 disordered regions span residues 88–127 (GTTGWHGSSRGHDGMSQRSGGSSTGNHRHWNGSFHSRKGC) and 155–189 (DFPSLNPEAGKQNQPCRPVGTPSGVWENPPSAKQP). The segment covering 103–112 (SQRSGGSSTG) has biased composition (polar residues). The span at 113–125 (NHRHWNGSFHSRK) shows a compositional bias: basic residues. Residue Ser199 is modified to Phosphoserine. Disordered regions lie at residues 235 to 267 (LVPKPAPPPSKPNAWKANRTEHKPGSLCSSRES) and 281 to 316 (LAAGAGLHSPKESPSSTTPPIEISSSRLTKLTRRTT). Phosphoserine is present on Ser289. Low complexity predominate over residues 292–309 (ESPSSTTPPIEISSSRLT). Phosphothreonine is present on Thr298. At Ser381 the chain carries Phosphoserine. The tract at residues 453-473 (ECEDSDSETSSSQTSDDDAWK) is disordered.

The protein belongs to the vasculin family.

It localises to the nucleus. Possible transcription factor. In Mus musculus (Mouse), this protein is Vasculin-like protein 1 (Gpbp1l1).